The chain runs to 85 residues: Putative N.vectensis toxin 1 9 (85 aa).

The signal sequence occupies residues 1-20 (MASFKIVIVCLALLVAVASA). Residues 21-36 (RRRDMMSDDELDYHFS) constitute a propeptide that is removed on maturation. 3 disulfide bridges follow: Cys42–Cys82, Cys44–Cys72, and Cys65–Cys83.

It belongs to the sea anemone sodium channel inhibitory toxin family. Type II subfamily. In terms of tissue distribution, expressed in ectodermal glands and in clumps outside of the extodermal layer. Is not expressed in nematocytes. In adult female tissues, shows similar expression levels in mesenteries (gametes-producing tissue), tentacles, pharynx and physa.

The protein localises to the secreted. In terms of biological role, binds to site 3 of voltage-gated sodium channels and inhibits the inactivation process. Is highly active on DmNav1/TipE (drosophila) and is only extremely weakly active on rat Nav1.4-beta-1/SCN4A-SCN1B, and on human Nav1.5-beta-1/SCN5A-beta-1. This reveals high specificity for arthropod over mammalian channels. In vivo, when released into the medium, this recombinant toxin induces impaired swimming, paralysis and death of the crustacean A.nauplii within several hours. Also causes paralysis of cherry shrimps immediately after injection at very low doses. Its effect on zebrafish (D.rerio) larvae is also rapid, since it induces tail twitching accompanied by impaired swimming after 20 minutes and complete paralysis within 45 minutes. It has also been observed to cause death of zebrafish larvae within 1 hour. The chain is Putative N.vectensis toxin 1 9 from Nematostella vectensis (Starlet sea anemone).